A 372-amino-acid chain; its full sequence is M protein, serotype 2.2 (372 aa).

The signal sequence occupies residues 1–41; that stretch reads MARQQTKKNYSLRKLKTGTASVAVALTVLGAGFANQTEVRA. C repeat units lie at residues 124-158, 166-200, and 215-249; these read AKTT…EAKH, KKLT…EAKY, and QKLE…TSEL. 3 stretches are compositionally biased toward basic and acidic residues: residues 125-169, 226-246, and 260-274; these read KTTK…KKLT, TSRK…KKVT, and EESK…AELQ. Disordered stretches follow at residues 125-191 and 211-274; these read KTTK…ASRA and EAKH…AELQ. 4 D repeats span residues 275-280, 281-286, 289-294, and 296-301; these read AKLDAQ, GKALKE, AKQTEE, and AKLRAE. A compositionally biased stretch (basic and acidic residues) spans 295–304; the sequence is LAKLRAEKAA. Residues 295–344 are disordered; the sequence is LAKLRAEKAAGSKTPATKPANKERSGRAAQTATRPSQNKGMRSQLPSTGE. Residues 322 to 341 show a composition bias toward polar residues; it reads AAQTATRPSQNKGMRSQLPS. Residues 339 to 343 carry the LPXTG sorting signal motif; it reads LPSTG. Threonine 342 bears the Pentaglycyl murein peptidoglycan amidated threonine mark. Residues 343-372 constitute a propeptide, removed by sortase; sequence GEAANPFFTAAAATVMVSAGMLALKRKEEN.

The protein belongs to the M protein family.

The protein resides in the secreted. It localises to the cell wall. This protein is one of the different antigenic serotypes of protein M. Protein M is closely associated with virulence of the bacterium and can render the organism resistant to phagocytosis. This is M protein, serotype 2.2 (emmL2.2) from Streptococcus pyogenes.